Consider the following 421-residue polypeptide: MSKLTIVRGFNDVLPLDSYKWQFLESKVKLILDRYNYSETRLPIVERSELFHRSVGESSDIVSKETYDFQDRNGDSLTLRPEGTAGCVRMVIENNLATRGQTQKLWYCGPMFRYERPQKGRYRQFYQLGVEAYGFDGIAIDLEVIAIAWSLFKELGISEYVTLELNSLGSSLNRQEYTQALLQYLKPYHAELDEDSIKRLDKNPLRILDSKIEKTQKILANAPKLIDFIDHDLRLRFKQTCQYLDALGVRYKLNENLVRGLDYYTGLVFEWTTDKLGSQSAICAGGRYDGLVENLGGQKTAAIGFAIGMERLLLLLEDLGKLPNQDNACDVFFILDSAQLHQSLAIVENIRQELPQLKIDMDLKFGSFKSQFKKADKSGAKVAIIIGQDELDNGFAGIKFLQQNEEQQQVAFNELINFLER.

This sequence belongs to the class-II aminoacyl-tRNA synthetase family. In terms of assembly, homodimer.

The protein localises to the cytoplasm. The enzyme catalyses tRNA(His) + L-histidine + ATP = L-histidyl-tRNA(His) + AMP + diphosphate + H(+). The polypeptide is Histidine--tRNA ligase (Francisella tularensis subsp. holarctica (strain FTNF002-00 / FTA)).